The primary structure comprises 46 residues: Iota-conotoxin-like Fi11.8 (46 aa).

2 positions are modified to 4-hydroxyproline: proline 2 and proline 11. 4 cysteine pairs are disulfide-bonded: cysteine 5-cysteine 19, cysteine 12-cysteine 22, cysteine 18-cysteine 27, and cysteine 21-cysteine 38. Position 29 is a 4-hydroxyproline (proline 29). At tryptophan 33 the chain carries 6'-bromotryptophan. The residue at position 44 (phenylalanine 44) is a D-phenylalanine.

The protein belongs to the conotoxin I1 superfamily. As to expression, expressed by the venom duct.

It localises to the secreted. Its function is as follows. Iota-conotoxins bind to voltage-gated sodium channels (Nav) and act as agonists by shifting the voltage-dependence of activation to more hyperpolarized levels. Produces general excitatory symptoms. This is Iota-conotoxin-like Fi11.8 from Conus figulinus (Fig cone).